Reading from the N-terminus, the 268-residue chain is Phosphatidylglycerol--prolipoprotein diacylglyceryl transferase (268 aa).

7 helical membrane-spanning segments follow: residues 27 to 47 (PALR…MWLL), 66 to 86 (LLFY…VLFY), 104 to 124 (GGMS…YITW), 130 to 150 (FFAV…AGRI), 181 to 201 (PSQL…LYWF), 208 to 228 (VGAV…IVET), and 242 to 262 (LMTM…YLIL). Residue R149 coordinates a 1,2-diacyl-sn-glycero-3-phospho-(1'-sn-glycerol).

The protein belongs to the Lgt family.

It is found in the cell inner membrane. It catalyses the reaction L-cysteinyl-[prolipoprotein] + a 1,2-diacyl-sn-glycero-3-phospho-(1'-sn-glycerol) = an S-1,2-diacyl-sn-glyceryl-L-cysteinyl-[prolipoprotein] + sn-glycerol 1-phosphate + H(+). It participates in protein modification; lipoprotein biosynthesis (diacylglyceryl transfer). Functionally, catalyzes the transfer of the diacylglyceryl group from phosphatidylglycerol to the sulfhydryl group of the N-terminal cysteine of a prolipoprotein, the first step in the formation of mature lipoproteins. This is Phosphatidylglycerol--prolipoprotein diacylglyceryl transferase from Shewanella oneidensis (strain ATCC 700550 / JCM 31522 / CIP 106686 / LMG 19005 / NCIMB 14063 / MR-1).